Here is a 492-residue protein sequence, read N- to C-terminus: N-succinylglutamate 5-semialdehyde dehydrogenase (492 aa).

Residue 220-225 (GSASTG) coordinates NAD(+). Residues E243 and C277 contribute to the active site.

The protein belongs to the aldehyde dehydrogenase family. AstD subfamily.

The enzyme catalyses N-succinyl-L-glutamate 5-semialdehyde + NAD(+) + H2O = N-succinyl-L-glutamate + NADH + 2 H(+). It functions in the pathway amino-acid degradation; L-arginine degradation via AST pathway; L-glutamate and succinate from L-arginine: step 4/5. Catalyzes the NAD-dependent reduction of succinylglutamate semialdehyde into succinylglutamate. The sequence is that of N-succinylglutamate 5-semialdehyde dehydrogenase from Salmonella agona (strain SL483).